A 486-amino-acid polypeptide reads, in one-letter code: Na(+)/H(+) antiporter NhaA 2 (486 aa).

11 helical membrane passes run 58–78, 102–122, 138–158, 168–188, 198–218, 220–240, 260–280, 300–320, 338–358, 374–394, and 404–424; these read GGLLLLAATVAALVWANTAPG, LTDWVADALLAVFFFTVGLEL, ALPVAAAAGGMLAPALLCLAL, AWAIPVATDIAFALGVLSLAG, VLLGLAVADDLGGILLIALGL, HGINPAWLATATTLLATTALA, ISLHAAGIHPTVAGVALGLLV, LGPINAAVILPAFALSATGVS, VAVGLLAGKLLGVPAGAWLAV, LVPLGLLAGIGYTVSLLITRL, and GASTAILTASVAASALALTAL. The tract at residues 432 to 486 is disordered; that stretch reads GAPATRGSSRPATQVGGVAGPIPQTRRESDGGPTGGQEPPPARVRRAPPASPHPR.

The protein belongs to the NhaA Na(+)/H(+) (TC 2.A.33) antiporter family.

Its subcellular location is the cell membrane. It carries out the reaction Na(+)(in) + 2 H(+)(out) = Na(+)(out) + 2 H(+)(in). In terms of biological role, na(+)/H(+) antiporter that extrudes sodium in exchange for external protons. The sequence is that of Na(+)/H(+) antiporter NhaA 2 from Frankia alni (strain DSM 45986 / CECT 9034 / ACN14a).